We begin with the raw amino-acid sequence, 93 residues long: UPF0223 protein LACR_0546 (93 aa).

This sequence belongs to the UPF0223 family.

The protein is UPF0223 protein LACR_0546 of Lactococcus lactis subsp. cremoris (strain SK11).